Here is a 325-residue protein sequence, read N- to C-terminus: tRNA U34 carboxymethyltransferase (325 aa).

Carboxy-S-adenosyl-L-methionine contacts are provided by residues Lys91, Trp105, Lys110, Gly130, 152–154 (DPS), Met196, Tyr200, and Arg315.

It belongs to the class I-like SAM-binding methyltransferase superfamily. CmoB family. In terms of assembly, homotetramer.

The enzyme catalyses carboxy-S-adenosyl-L-methionine + 5-hydroxyuridine(34) in tRNA = 5-carboxymethoxyuridine(34) in tRNA + S-adenosyl-L-homocysteine + H(+). In terms of biological role, catalyzes carboxymethyl transfer from carboxy-S-adenosyl-L-methionine (Cx-SAM) to 5-hydroxyuridine (ho5U) to form 5-carboxymethoxyuridine (cmo5U) at position 34 in tRNAs. The chain is tRNA U34 carboxymethyltransferase from Aeromonas salmonicida (strain A449).